The sequence spans 121 residues: uncharacterized protein (121 aa).

Positions 1 to 31 (MILNNKGFIRILEATIAGIMVILVFSYLVMS) are cleaved as a signal peptide.

To B.burgdorferi BB0465 N-terminal region.

This is an uncharacterized protein from Methanocaldococcus jannaschii (strain ATCC 43067 / DSM 2661 / JAL-1 / JCM 10045 / NBRC 100440) (Methanococcus jannaschii).